A 219-amino-acid chain; its full sequence is GPI ethanolamine phosphate transferase, stabilizing subunit (219 aa).

A run of 6 helical transmembrane segments spans residues 11–31 (YTHLLCIFSIILSVFIPSLFL), 42–62 (TWLCICSGFVTAVNLVLYLVV), 86–106 (YFLMSCFSFHVIFVLYGAPLI), 113–133 (FLFAVILSTFTTVPCLCLLGP), 155–175 (LQITTISSFVGAWLGALPIPL), and 189–209 (TLGATFGYVAGLVISPLWIYW).

The protein belongs to the PIGF family. Part of the ethanolamine phosphate transferase 3 complex composed by PIGO and PIGF. Part of the ethanolamine phosphate transferase 2 complex with PIGG. PIGF is required to stabilize PIGG and PIGO.

The protein resides in the endoplasmic reticulum membrane. It participates in glycolipid biosynthesis; glycosylphosphatidylinositol-anchor biosynthesis. In terms of biological role, stabilizing subunit of the ethanolamine phosphate transferase 3 and ethanolamine phosphate transferase 2 complexes that sequentially transfer an ethanolamine phosphate (EtNP) from a phosphatidylethanolamine (PE) to the 6-OH position of the third alpha-1,2-linked mannose and the second alpha-1,6-linked mannose of the alpha-D-Man-(1-&gt;2)-alpha-D-Man-(1-&gt;6)-2-PEtn-alpha-D-Man-(1-&gt;4)-alpha-D-GlcN-(1-&gt;6)-(1-radyl,2-acyl-sn-glycero-3-phospho)-2-acyl-inositol (also termed H6) intermediate to generate a 6-PEtn-alpha-D-Man-(1-&gt;2)-6-PEtn-alpha-D-Man-(1-&gt;6)-2-PEtn-alpha-D-Man-(1-&gt;4)-alpha-D-GlcN-(1-&gt;6)-(1-radyl,2-acyl-sn-glycero-3-phospho)-2-acyl-inositol (also termed H8). Participates in the tenth and eleventh steps of the glycosylphosphatidylinositol-anchor biosynthesis, in association with PIGO and PIGG, respectively. This chain is GPI ethanolamine phosphate transferase, stabilizing subunit, found in Homo sapiens (Human).